Consider the following 358-residue polypeptide: Peptide chain release factor 1 (358 aa).

Q232 carries the N5-methylglutamine modification.

It belongs to the prokaryotic/mitochondrial release factor family. In terms of processing, methylated by PrmC. Methylation increases the termination efficiency of RF1.

The protein resides in the cytoplasm. Its function is as follows. Peptide chain release factor 1 directs the termination of translation in response to the peptide chain termination codons UAG and UAA. The protein is Peptide chain release factor 1 of Acidobacterium capsulatum (strain ATCC 51196 / DSM 11244 / BCRC 80197 / JCM 7670 / NBRC 15755 / NCIMB 13165 / 161).